The following is a 166-amino-acid chain: Shikimate kinase (166 aa).

G11–T16 contributes to the ATP binding site. Residue S15 coordinates Mg(2+). The substrate site is built by D33, R57, and G79. An ATP-binding site is contributed by R117. Substrate is bound at residue R134.

The protein belongs to the shikimate kinase family. In terms of assembly, monomer. It depends on Mg(2+) as a cofactor.

Its subcellular location is the cytoplasm. The enzyme catalyses shikimate + ATP = 3-phosphoshikimate + ADP + H(+). Its pathway is metabolic intermediate biosynthesis; chorismate biosynthesis; chorismate from D-erythrose 4-phosphate and phosphoenolpyruvate: step 5/7. Catalyzes the specific phosphorylation of the 3-hydroxyl group of shikimic acid using ATP as a cosubstrate. The polypeptide is Shikimate kinase (Sulfurihydrogenibium sp. (strain YO3AOP1)).